The sequence spans 228 residues: Demethylmenaquinone methyltransferase (228 aa).

S-adenosyl-L-methionine contacts are provided by residues threonine 62, aspartate 80, 100 to 101 (DA), and serine 117.

Belongs to the class I-like SAM-binding methyltransferase superfamily. MenG/UbiE family.

The enzyme catalyses a 2-demethylmenaquinol + S-adenosyl-L-methionine = a menaquinol + S-adenosyl-L-homocysteine + H(+). The protein operates within quinol/quinone metabolism; menaquinone biosynthesis; menaquinol from 1,4-dihydroxy-2-naphthoate: step 2/2. Methyltransferase required for the conversion of demethylmenaquinol (DMKH2) to menaquinol (MKH2). The sequence is that of Demethylmenaquinone methyltransferase from Mycolicibacterium gilvum (strain PYR-GCK) (Mycobacterium gilvum (strain PYR-GCK)).